A 246-amino-acid polypeptide reads, in one-letter code: Probable 2-phosphosulfolactate phosphatase (246 aa).

Belongs to the ComB family. Mg(2+) serves as cofactor.

It carries out the reaction (2R)-O-phospho-3-sulfolactate + H2O = (2R)-3-sulfolactate + phosphate. The polypeptide is Probable 2-phosphosulfolactate phosphatase (Synechococcus sp. (strain WH7803)).